The primary structure comprises 455 residues: Ribosomal protein uS12 methylthiotransferase RimO (455 aa).

The MTTase N-terminal domain maps to arginine 10–arginine 126. [4Fe-4S] cluster-binding residues include cysteine 19, cysteine 55, cysteine 89, cysteine 164, cysteine 168, and cysteine 171. Positions serine 150–arginine 380 constitute a Radical SAM core domain. Residues arginine 383–aspartate 451 form the TRAM domain.

Belongs to the methylthiotransferase family. RimO subfamily. It depends on [4Fe-4S] cluster as a cofactor.

The protein resides in the cytoplasm. The catalysed reaction is L-aspartate(89)-[ribosomal protein uS12]-hydrogen + (sulfur carrier)-SH + AH2 + 2 S-adenosyl-L-methionine = 3-methylsulfanyl-L-aspartate(89)-[ribosomal protein uS12]-hydrogen + (sulfur carrier)-H + 5'-deoxyadenosine + L-methionine + A + S-adenosyl-L-homocysteine + 2 H(+). Catalyzes the methylthiolation of an aspartic acid residue of ribosomal protein uS12. This chain is Ribosomal protein uS12 methylthiotransferase RimO, found in Syntrophotalea carbinolica (strain DSM 2380 / NBRC 103641 / GraBd1) (Pelobacter carbinolicus).